The following is a 682-amino-acid chain: Potassium-transporting ATPase ATP-binding subunit (682 aa).

The next 4 helical transmembrane spans lie at 34–54 (PVMF…IAMA), 62–82 (ALFS…ANFA), 219–239 (IALT…TATL), and 254–274 (VLVA…LSAI). The active-site 4-aspartylphosphate intermediate is Asp-307. ATP is bound by residues Asp-344, Glu-348, 377–384 (FTAQSRMS), and Lys-395. Residues Asp-518 and Asp-522 each coordinate Mg(2+). 3 helical membrane passes run 588–608 (FAII…LNIM), 616–636 (AILS…PLAL), and 656–676 (IYGL…DLLL).

Belongs to the cation transport ATPase (P-type) (TC 3.A.3) family. Type IA subfamily. The system is composed of three essential subunits: KdpA, KdpB and KdpC.

Its subcellular location is the cell inner membrane. It carries out the reaction K(+)(out) + ATP + H2O = K(+)(in) + ADP + phosphate + H(+). In terms of biological role, part of the high-affinity ATP-driven potassium transport (or Kdp) system, which catalyzes the hydrolysis of ATP coupled with the electrogenic transport of potassium into the cytoplasm. This subunit is responsible for energy coupling to the transport system and for the release of the potassium ions to the cytoplasm. In Escherichia coli (strain UTI89 / UPEC), this protein is Potassium-transporting ATPase ATP-binding subunit.